The chain runs to 497 residues: Probable malate:quinone oxidoreductase (497 aa).

Belongs to the MQO family. The cofactor is FAD.

It catalyses the reaction (S)-malate + a quinone = a quinol + oxaloacetate. The protein operates within carbohydrate metabolism; tricarboxylic acid cycle; oxaloacetate from (S)-malate (quinone route): step 1/1. This chain is Probable malate:quinone oxidoreductase, found in Tolumonas auensis (strain DSM 9187 / NBRC 110442 / TA 4).